The following is a 474-amino-acid chain: Semenogelin-2 (474 aa).

The signal sequence occupies residues 1–23 (MKSIILFVLSLLLILEKQAAVMG). Disordered stretches follow at residues 24–62 (QKGG…SKGS), 132–158 (GGQA…LSSQ), 173–194 (KEQA…QSSY), 226–247 (VREE…DRLQ), and 272–474 (NLNQ…SSTE). Composition is skewed to polar residues over residues 31–40 (QLPSGSSQFP), 137–158 (RGTQ…LSSQ), and 174–194 (EQAS…QSSY). Residues 292-310 (RTEERQLNHGEKSVQKDVS) show a composition bias toward basic and acidic residues. The segment covering 325–334 (KSQNQVTIHS) has biased composition (polar residues). Positions 335–346 (QDQEHGHKENKM) are enriched in basic and acidic residues. A compositionally biased stretch (polar residues) spans 372–397 (GSISIQTEEQIHGKSQNQVRIPSQAQ). The span at 399 to 426 (YGHKENKISYRSSSTEERRLNSGEKDVQ) shows a compositional bias: basic and acidic residues. Over residues 445–455 (KSQNQVTIPSQ) the composition is skewed to polar residues. Residues 456–465 (DQEHGHKENK) show a composition bias toward basic and acidic residues.

It belongs to the semenogelin family. As to quaternary structure, interacts with SERPINA5.

Its subcellular location is the secreted. Functionally, participates in the formation of a gel matrix (sperm coagulum) entrapping the accessory gland secretions and ejaculated spermatozoa. The protein is Semenogelin-2 (SEMG2) of Gorilla gorilla gorilla (Western lowland gorilla).